The sequence spans 681 residues: Dipeptidyl carboxypeptidase (681 aa).

Residue His-470 participates in Zn(2+) binding. The active site involves Glu-471. 2 residues coordinate Zn(2+): His-474 and His-477.

The protein belongs to the peptidase M3 family. The cofactor is Zn(2+).

Its subcellular location is the cytoplasm. It carries out the reaction Hydrolysis of unblocked, C-terminal dipeptides from oligopeptides, with broad specificity. Does not hydrolyze bonds in which P1' is Pro, or both P1 and P1' are Gly.. With respect to regulation, stimulated by Mn(2+), Mg(2+), Co(2+) and Ca(2+), inhibited by Cu(2+), Ni(2+), Zn(2+), chymostatin and 1,10-phenanthroline. Removes dipeptides from the C-termini of N-blocked tripeptides, tetrapeptides and larger peptides. The polypeptide is Dipeptidyl carboxypeptidase (Escherichia coli (strain K12)).